The following is a 160-amino-acid chain: Large ribosomal subunit protein uL15 (160 aa).

Over residues 1–13 (MKLHELSDNDGAA) the composition is skewed to basic and acidic residues. The disordered stretch occupies residues 1-42 (MKLHELSDNDGAAKKRKRVGRGPGSGTGKMGGRGIKGQKSRS). The segment covering 21-35 (RGPGSGTGKMGGRGI) has biased composition (gly residues).

This sequence belongs to the universal ribosomal protein uL15 family. As to quaternary structure, part of the 50S ribosomal subunit.

Functionally, binds to the 23S rRNA. In Roseobacter denitrificans (strain ATCC 33942 / OCh 114) (Erythrobacter sp. (strain OCh 114)), this protein is Large ribosomal subunit protein uL15.